The sequence spans 118 residues: Autophagy-related protein 8D (118 aa).

A lipid anchor (Phosphatidylethanolamine amidated glycine) is attached at G118.

This sequence belongs to the ATG8 family. Interacts with ATG4. In terms of processing, the C-terminal Gly is amidated with phosphatidylethanolamine by an activating system similar to that for ubiquitin.

It localises to the cytoplasmic vesicle. It is found in the autophagosome membrane. The protein localises to the vacuole membrane. The protein resides in the cytoplasm. Its subcellular location is the cytoskeleton. Ubiquitin-like modifier involved in autophagosomes formation. May mediate the delivery of the autophagosomes to the vacuole via the microtubule cytoskeleton. This is Autophagy-related protein 8D (ATG8D) from Oryza sativa subsp. japonica (Rice).